We begin with the raw amino-acid sequence, 243 residues long: Leucyl/phenylalanyl-tRNA--protein transferase (243 aa).

It belongs to the L/F-transferase family.

It is found in the cytoplasm. It catalyses the reaction N-terminal L-lysyl-[protein] + L-leucyl-tRNA(Leu) = N-terminal L-leucyl-L-lysyl-[protein] + tRNA(Leu) + H(+). The enzyme catalyses N-terminal L-arginyl-[protein] + L-leucyl-tRNA(Leu) = N-terminal L-leucyl-L-arginyl-[protein] + tRNA(Leu) + H(+). It carries out the reaction L-phenylalanyl-tRNA(Phe) + an N-terminal L-alpha-aminoacyl-[protein] = an N-terminal L-phenylalanyl-L-alpha-aminoacyl-[protein] + tRNA(Phe). Functions in the N-end rule pathway of protein degradation where it conjugates Leu, Phe and, less efficiently, Met from aminoacyl-tRNAs to the N-termini of proteins containing an N-terminal arginine or lysine. This chain is Leucyl/phenylalanyl-tRNA--protein transferase, found in Xylella fastidiosa (strain 9a5c).